The chain runs to 369 residues: tRNA-specific 2-thiouridylase MnmA (369 aa).

ATP contacts are provided by residues 16-23 (AMSGGVDS) and Met-42. The Nucleophile role is filled by Cys-110. Cys-110 and Cys-206 form a disulfide bridge. Gly-134 contacts ATP. The tract at residues 156–158 (KDQ) is interaction with tRNA. Residue Cys-206 is the Cysteine persulfide intermediate of the active site.

Belongs to the MnmA/TRMU family.

It is found in the cytoplasm. It carries out the reaction S-sulfanyl-L-cysteinyl-[protein] + uridine(34) in tRNA + AH2 + ATP = 2-thiouridine(34) in tRNA + L-cysteinyl-[protein] + A + AMP + diphosphate + H(+). In terms of biological role, catalyzes the 2-thiolation of uridine at the wobble position (U34) of tRNA, leading to the formation of s(2)U34. This is tRNA-specific 2-thiouridylase MnmA from Orientia tsutsugamushi (strain Boryong) (Rickettsia tsutsugamushi).